Consider the following 354-residue polypeptide: Erythroferrone (354 aa).

The first 28 residues, 1 to 28, serve as a signal peptide directing secretion; that stretch reads MAPARRPAGARLLLVYAGLLAAAAAGLG. Low complexity-rich tracts occupy residues 26 to 37 and 51 to 62; these read GLGSPEPGAPSR and PRGPGESRAGPA. Residues 26–123 are disordered; the sequence is GLGSPEPGAP…PGPPGPQGPP (98 aa). Over residues 69–80 the composition is skewed to basic and acidic residues; the sequence is TAERAHSVDPRD. Positions 94–107 are enriched in basic residues; that stretch reads NGKKRSRGKAKKLK. Residues P111, P113, P114, P116, P117, and P119 each carry the hydroxyproline modification. Residues 111 to 123 show a composition bias toward pro residues; it reads PGPPGPPGPQGPP. Positions 199-354 constitute a C1q domain; sequence APRVEAAFLC…SHFSAVLLGV (156 aa). N-linked (GlcNAc...) asparagine glycans are attached at residues N243, N295, and N333.

The protein belongs to the adipolin/erythroferrone family. In terms of assembly, homodimer; disulfide-linked. Forms trimer, hexamers and higher molecular weight oligomers. May form heteromeric complexes with C1QTNF2 and C1QTNF12 and, to a lesser extent, with C1QTNF5 and C1QTNF10. Interacts with BMP5 and BMP7; the interaction inhibits BMP-induced transcription of HAMP. Interacts with BMP6; the interaction inhibits BMP-induced transcription of HAMP. Interacts with BMP2. Interacts with heterodimers composed of BMP2 and BMP6 in vitro, the interaction inhibits the heterodimer binding to its receptor BMPR1A /ALK3 and thereby suppresses expression of HAMP. N-glycosylated; required for secretion of the mature protein.

It is found in the secreted. Iron-regulatory hormone that acts as an erythroid regulator after hemorrhage: produced by erythroblasts following blood loss and mediates suppression of hepcidin (HAMP) expression in the liver, thereby promoting increased iron absorption and mobilization from stores. Promotes lipid uptake into adipocytes and hepatocytes via transcriptional up-regulation of genes involved in fatty acid uptake. Inhibits apoptosis and inflammatory response in cardiomyocytes via promotion of sphingosine-1-phosphate (S1P) and cAMP-dependent activation of AKT signaling. Inhibits autophagy induced by nutrient deficiency in hepatocytes via promoting the phosphorylation of IRS1, AKT, and MTOR, and thereby subsequent activation of the AKT-MTOR signaling pathway. Negatively regulates the differentiation of osteoblasts, potentially via sequestering BMP2, and thereby inhibits the activation of SMAD signaling. The reduction in BMP2 signaling in osteoblasts also results in an increase in expression of the osteoclastogenesis-promoting factors TNFSF11/RANKL and SOST, thereby indirectly promotes bone resorption. The polypeptide is Erythroferrone (Homo sapiens (Human)).